A 209-amino-acid polypeptide reads, in one-letter code: dITP/XTP pyrophosphatase (209 aa).

Position 7–12 (7–12 (SSHGYK)) interacts with substrate. The active-site Proton acceptor is the Asp70. Asp70 serves as a coordination point for Mg(2+). Substrate is bound by residues Ser71, 154-157 (FGYD), Lys177, and 182-183 (HR).

The protein belongs to the HAM1 NTPase family. Homodimer. Mg(2+) is required as a cofactor.

The catalysed reaction is XTP + H2O = XMP + diphosphate + H(+). It catalyses the reaction dITP + H2O = dIMP + diphosphate + H(+). It carries out the reaction ITP + H2O = IMP + diphosphate + H(+). In terms of biological role, pyrophosphatase that catalyzes the hydrolysis of nucleoside triphosphates to their monophosphate derivatives, with a high preference for the non-canonical purine nucleotides XTP (xanthosine triphosphate), dITP (deoxyinosine triphosphate) and ITP. Seems to function as a house-cleaning enzyme that removes non-canonical purine nucleotides from the nucleotide pool, thus preventing their incorporation into DNA/RNA and avoiding chromosomal lesions. In Chlamydia trachomatis serovar L2 (strain ATCC VR-902B / DSM 19102 / 434/Bu), this protein is dITP/XTP pyrophosphatase.